The primary structure comprises 242 residues: Biosynthetic peptidoglycan transglycosylase (242 aa).

Residues Ile19–Val39 traverse the membrane as a helical segment.

Belongs to the glycosyltransferase 51 family.

It localises to the cell inner membrane. The enzyme catalyses [GlcNAc-(1-&gt;4)-Mur2Ac(oyl-L-Ala-gamma-D-Glu-L-Lys-D-Ala-D-Ala)](n)-di-trans,octa-cis-undecaprenyl diphosphate + beta-D-GlcNAc-(1-&gt;4)-Mur2Ac(oyl-L-Ala-gamma-D-Glu-L-Lys-D-Ala-D-Ala)-di-trans,octa-cis-undecaprenyl diphosphate = [GlcNAc-(1-&gt;4)-Mur2Ac(oyl-L-Ala-gamma-D-Glu-L-Lys-D-Ala-D-Ala)](n+1)-di-trans,octa-cis-undecaprenyl diphosphate + di-trans,octa-cis-undecaprenyl diphosphate + H(+). Its pathway is cell wall biogenesis; peptidoglycan biosynthesis. Peptidoglycan polymerase that catalyzes glycan chain elongation from lipid-linked precursors. This Salmonella heidelberg (strain SL476) protein is Biosynthetic peptidoglycan transglycosylase.